An 864-amino-acid chain; its full sequence is Receptor like protein 24 (864 aa).

Residues 1 to 29 (MKTVFKSLLLLHFLLLLLLCFVSPSSFFL) form the signal peptide. Topologically, residues 30–830 (LKVPVGGLVA…EEKGEVINWK (801 aa)) are extracellular. N61, N73, N94, and N112 each carry an N-linked (GlcNAc...) asparagine glycan. LRR repeat units follow at residues 100–125 (FHQL…FCNL), 127–148 (KLKL…DLMG), 156–182 (LGKL…LFEL), 183–205 (HSLR…KFGN), 207–229 (NKLE…TISN), 230–253 (LTRI…VQNL), 254–277 (TKLS…LFTF), 279–303 (SLST…STSS), 305–326 (LEIM…ISKL), 327–350 (INLK…LLSP), 351–376 (LKSL…SYIP), 378–398 (SMES…ILKH), 399–423 (LQNL…LWTL), 425–448 (QLSF…VFVN), and 449–472 (LSVR…PLSI). Residues N176, N194, N229, and N252 are each glycosylated (N-linked (GlcNAc...) asparagine). Residue N298 is glycosylated (N-linked (GlcNAc...) asparagine). N-linked (GlcNAc...) asparagine glycosylation is present at N338. N-linked (GlcNAc...) asparagine glycosylation is found at N433 and N448. One copy of the LRR 16; degenerate repeat lies at 473–492 (IGFSAIHNSFTGEIPLSICN). 2 N-linked (GlcNAc...) asparagine glycosylation sites follow: N492 and N505. 10 LRR repeats span residues 493 to 514 (RTSL…PQCL), 515 to 538 (SNFM…FYTD), 539 to 562 (SSLK…LLNC), 564 to 585 (SLRF…WLKA), 586 to 610 (LPNL…HQGP), 613 to 637 (FPEL…FFVN), 688 to 712 (LTSY…IGLL), 713 to 735 (KALI…SFAN), 736 to 760 (LMNL…LGSL), and 762 to 785 (FLVY…QITG). N-linked (GlcNAc...) asparagine glycosylation occurs at N561. An N-linked (GlcNAc...) asparagine glycan is attached at N719. A helical transmembrane segment spans residues 831 to 851 (AVAIGYAPGLLFGLAIAHLIA). Residues 852–864 (SYKPEWLVKIIGF) are Cytoplasmic-facing.

This sequence belongs to the RLP family.

The protein localises to the cell membrane. This chain is Receptor like protein 24, found in Arabidopsis thaliana (Mouse-ear cress).